Reading from the N-terminus, the 299-residue chain is Acetylglutamate kinase (299 aa).

Substrate-binding positions include 70–71 (GG), R92, and N186.

The protein belongs to the acetylglutamate kinase family. ArgB subfamily.

The protein resides in the cytoplasm. The enzyme catalyses N-acetyl-L-glutamate + ATP = N-acetyl-L-glutamyl 5-phosphate + ADP. It functions in the pathway amino-acid biosynthesis; L-arginine biosynthesis; N(2)-acetyl-L-ornithine from L-glutamate: step 2/4. Functionally, catalyzes the ATP-dependent phosphorylation of N-acetyl-L-glutamate. In Caldanaerobacter subterraneus subsp. tengcongensis (strain DSM 15242 / JCM 11007 / NBRC 100824 / MB4) (Thermoanaerobacter tengcongensis), this protein is Acetylglutamate kinase.